The following is an 810-amino-acid chain: Sister chromatid cohesion 1 protein 2 (810 aa).

Disordered regions lie at residues 200-244 (RDTT…LLEP), 273-315 (SHES…SECG), and 606-626 (MGASSTTSGTAHQTENAAETP). 2 stretches are compositionally biased toward basic and acidic residues: residues 220 to 234 (EPSRDHQNASRHRED) and 273 to 310 (SHESSGDNLHRDGHTENLESEKTSKKTSCEEMQHDRSL). The span at 606–622 (MGASSTTSGTAHQTENA) shows a compositional bias: polar residues.

Belongs to the rad21 family. Component of the cohesin complex. As to expression, low expression in shoots, buds, siliques, leaves and roots. Found in, but not limited to, actively dividing cells: in procambium, protoderm and ground meristem in roots, and in shoot and floral meristems.

It is found in the nucleus. Functionally, may be involved in sister chromatid cohesion during mitosis. The protein is Sister chromatid cohesion 1 protein 2 (SYN2) of Arabidopsis thaliana (Mouse-ear cress).